A 262-amino-acid chain; its full sequence is uncharacterized protein (262 aa).

A BTB domain is found at 5-107 (PLISLDVEGV…MIEHKLRTFC (103 aa)). Residues 182–195 (ISLPRNFTHIAHVG) enclose the CRIB domain.

This is an uncharacterized protein from Caenorhabditis elegans.